Here is a 178-residue protein sequence, read N- to C-terminus: Caveolin-1 (178 aa).

An N-acetylserine modification is found at S2. S2 is modified (phosphoserine). The tract at residues 2–94 (SGGKYVDSEG…WKASFTTFTV (93 aa)) is required for homooligomerization. At 2–104 (SGGKYVDSEG…TKYWFYRLLS (103 aa)) the chain is on the cytoplasmic side. K5 is subject to N6-acetyllysine; alternate. A Glycyl lysine isopeptide (Lys-Gly) (interchain with G-Cter in ubiquitin); alternate cross-link involves residue K5. Y6 is modified (phosphotyrosine). Residue S9 is modified to Phosphoserine. Y14 is subject to Phosphotyrosine; by ABL1. At Y25 the chain carries Phosphotyrosine. Residues K26, K30, K39, K47, and K57 each participate in a glycyl lysine isopeptide (Lys-Gly) (interchain with G-Cter in ubiquitin) cross-link. Residues 82-94 (DGIWKASFTTFTV) are interaction with CAVIN3. Positions 105–125 (ALFGIPMALIWGIYFAILSFL) form an intramembrane region, helical. At 126-178 (HIWAVVPCIKSFLIEIQCISRVYSIYVHTFCDPLFEAIGKIFSNIRINMQKEI) the chain is on the cytoplasmic side. Residues 131–142 (VPCIKSFLIEIQ) are interacts with SPRY1, SPRY2, SPRY3 and SPRY4. 3 S-palmitoyl cysteine lipidation sites follow: C133, C143, and C156. The interval 149–160 (SIYVHTFCDPLF) is interacts with SPRY1, SPRY2, and SPRY4. The interval 167-178 (FSNIRINMQKEI) is interacts with SPRY1, SPRY2, SPRY3 and SPRY4.

Belongs to the caveolin family. Homooligomer. Interacts (via the N-terminus) with DPP4; the interaction is direct. Forms a stable heterooligomeric complex with CAV2 that targets to lipid rafts and drives caveolae formation. Interacts with PACSIN2; this interaction induces membrane tubulation. Interacts with BMX, BTK, CTNNB1, CDH1, GLIPR2, JUP, NOSTRIN, SNAP25 and STX1A. Interacts with SLC7A9. Interacts with TGFBR1. Interacts with CAVIN3 (via leucine-zipper domain) in a cholesterol-sensitive manner. Interacts with CAVIN1. Interacts with EHD2 in a cholesterol-dependent manner. Forms a ternary complex with UBXN6 and VCP; mediates CAV1 targeting to lysosomes for degradation. Interacts with ABCG1; this interaction regulates ABCG1-mediated cholesterol efflux. Interacts with NEU3; this interaction enhances NEU3 sialidase activity within caveola. Interacts (via C-terminus) with SPRY1, SPRY2 (via C-terminus), SPRY3, and SPRY4. Post-translationally, phosphorylated at Tyr-14 by ABL1 in response to oxidative stress. Ubiquitinated. Undergo monoubiquitination and multi- and/or polyubiquitination. Monoubiquitination of N-terminal lysines promotes integration in a ternary complex with UBXN6 and VCP which promotes oligomeric CAV1 targeting to lysosomes for degradation. Ubiquitinated by ZNRF1; leading to degradation and modulation of the TLR4-mediated immune response.

It is found in the golgi apparatus membrane. The protein localises to the cell membrane. The protein resides in the membrane. It localises to the caveola. Its subcellular location is the membrane raft. Functionally, may act as a scaffolding protein within caveolar membranes. Forms a stable heterooligomeric complex with CAV2 that targets to lipid rafts and drives caveolae formation. Mediates the recruitment of CAVIN proteins (CAVIN1/2/3/4) to the caveolae. Interacts directly with G-protein alpha subunits and can functionally regulate their activity. Involved in the costimulatory signal essential for T-cell receptor (TCR)-mediated T-cell activation. Its binding to DPP4 induces T-cell proliferation and NF-kappa-B activation in a T-cell receptor/CD3-dependent manner. Recruits CTNNB1 to caveolar membranes and may regulate CTNNB1-mediated signaling through the Wnt pathway. Negatively regulates TGFB1-mediated activation of SMAD2/3 by mediating the internalization of TGFBR1 from membrane rafts leading to its subsequent degradation. Binds 20(S)-hydroxycholesterol (20(S)-OHC). This Otolemur garnettii (Small-eared galago) protein is Caveolin-1 (CAV1).